We begin with the raw amino-acid sequence, 260 residues long: Adenosylcobinamide-GDP ribazoletransferase (260 aa).

The next 8 helical transmembrane spans lie at 3-23 (APLW…LPAW), 36-56 (FAPW…LVLI), 60-80 (WPTS…SGGL), 108-128 (VGAS…AALL), 133-153 (LAPL…LWAM), 180-200 (ALPA…LMIV), 206-226 (MVLM…PELL), and 239-259 (GASV…LLTA).

This sequence belongs to the CobS family. Mg(2+) serves as cofactor.

It localises to the cell inner membrane. The catalysed reaction is alpha-ribazole + adenosylcob(III)inamide-GDP = adenosylcob(III)alamin + GMP + H(+). It carries out the reaction alpha-ribazole 5'-phosphate + adenosylcob(III)inamide-GDP = adenosylcob(III)alamin 5'-phosphate + GMP + H(+). It functions in the pathway cofactor biosynthesis; adenosylcobalamin biosynthesis; adenosylcobalamin from cob(II)yrinate a,c-diamide: step 7/7. Joins adenosylcobinamide-GDP and alpha-ribazole to generate adenosylcobalamin (Ado-cobalamin). Also synthesizes adenosylcobalamin 5'-phosphate from adenosylcobinamide-GDP and alpha-ribazole 5'-phosphate. This Prochlorococcus marinus (strain MIT 9303) protein is Adenosylcobinamide-GDP ribazoletransferase.